A 297-amino-acid polypeptide reads, in one-letter code: 3-methyl-2-oxobutanoate hydroxymethyltransferase (297 aa).

Positions 1–15 are enriched in polar residues; sequence MSEQISEQSEQNVYG. A disordered region spans residues 1-40; that stretch reads MSEQISEQSEQNVYGASSPVPAGESSPSAASAPRTKVRTH. The segment covering 16–33 has biased composition (low complexity); that stretch reads ASSPVPAGESSPSAASAP. Residues Asp78 and Asp117 each coordinate Mg(2+). 3-methyl-2-oxobutanoate contacts are provided by residues 78-79, Asp117, and Lys147; that span reads DS. Glu149 contributes to the Mg(2+) binding site. Glu215 acts as the Proton acceptor in catalysis.

Belongs to the PanB family. In terms of assembly, homodecamer; pentamer of dimers. Requires Mg(2+) as cofactor.

It localises to the cytoplasm. The enzyme catalyses 3-methyl-2-oxobutanoate + (6R)-5,10-methylene-5,6,7,8-tetrahydrofolate + H2O = 2-dehydropantoate + (6S)-5,6,7,8-tetrahydrofolate. The protein operates within cofactor biosynthesis; (R)-pantothenate biosynthesis; (R)-pantoate from 3-methyl-2-oxobutanoate: step 1/2. Functionally, catalyzes the reversible reaction in which hydroxymethyl group from 5,10-methylenetetrahydrofolate is transferred onto alpha-ketoisovalerate to form ketopantoate. In Mycobacterium marinum (strain ATCC BAA-535 / M), this protein is 3-methyl-2-oxobutanoate hydroxymethyltransferase.